Reading from the N-terminus, the 475-residue chain is Glutamate--tRNA ligase (475 aa).

Residues P11–G21 carry the 'HIGH' region motif. Residues K240–R244 carry the 'KMSKS' region motif. K243 contributes to the ATP binding site.

The protein belongs to the class-I aminoacyl-tRNA synthetase family. Glutamate--tRNA ligase type 1 subfamily. As to quaternary structure, monomer.

Its subcellular location is the cytoplasm. The catalysed reaction is tRNA(Glu) + L-glutamate + ATP = L-glutamyl-tRNA(Glu) + AMP + diphosphate. Its function is as follows. Catalyzes the attachment of glutamate to tRNA(Glu) in a two-step reaction: glutamate is first activated by ATP to form Glu-AMP and then transferred to the acceptor end of tRNA(Glu). The polypeptide is Glutamate--tRNA ligase (Bradyrhizobium diazoefficiens (strain JCM 10833 / BCRC 13528 / IAM 13628 / NBRC 14792 / USDA 110)).